A 1024-amino-acid polypeptide reads, in one-letter code: Ribonucleases P/MRP protein subunit POP1 (1024 aa).

Basic residues predominate over residues 1–14 (MSNAKERKHAKKMR). Disordered stretches follow at residues 1-95 (MSNA…EGTS) and 365-399 (TPSQEKSQTELPDEKIGKKRKRKDDGENAKPIKKI). 2 stretches are compositionally biased toward polar residues: residues 15–24 (NQPTNVTLSS) and 53–62 (TSRQRQTRVN). A Phosphoserine modification is found at Ser367. Positions 387–399 (KDDGENAKPIKKI) are enriched in basic and acidic residues. Residues Ser584, Ser729, and Ser730 each carry the phosphoserine modification. Disordered stretches follow at residues 722–762 (YEEP…VGTS), 773–792 (MDAGCQESAGPERITDQEAS), 819–838 (CGPSSEDSRGGRRAPGRGQQ), and 911–936 (QKEKKKREKRQKPGRASSDGPAGEEP). Positions 911-923 (QKEKKKREKRQKP) are enriched in basic residues.

In terms of assembly, component of nuclear RNase P and RNase MRP ribonucleoproteins. RNase P consists of a catalytic RNA moiety and 10 different protein chains; POP1, POP4, POP5, POP7, RPP14, RPP21, RPP25, RPP30, RPP38 and RPP40. Within the RNase P complex, POP1, POP7 and RPP25 form the 'finger' subcomplex, POP5, RPP14, RPP40 and homodimeric RPP30 form the 'palm' subcomplex, and RPP21, POP4 and RPP38 form the 'wrist' subcomplex. All subunits of the RNase P complex interact with the catalytic RNA. Several subunits of RNase P are also part of the RNase MRP complex. RNase MRP consists of a catalytic RNA moiety and about 8 protein subunits; POP1, POP7, RPP25, RPP30, RPP38, RPP40 and possibly also POP4 and POP5.

It localises to the nucleus. The protein localises to the nucleolus. Its function is as follows. Component of ribonuclease P, a ribonucleoprotein complex that generates mature tRNA molecules by cleaving their 5'-ends. Also a component of the MRP ribonuclease complex, which cleaves pre-rRNA sequences. The protein is Ribonucleases P/MRP protein subunit POP1 (POP1) of Homo sapiens (Human).